The primary structure comprises 507 residues: MATKDPAVTTPDDSQLEAGRGNTGNNAGDALEKPSSSTGTMVDEPADPNVVDWDGPDDPEHPLNWSKTQKNLHLVIVSLFTLAANLAATMFAPGAEELATEFSITNSTVTAMTVSLYVLGFALGPLLLAPLSELYGRLIVYYGCNFVYIAFTIGCAFSTNVAMFLVFRIICGCAASGPMSIGGGTVADLFPQEERGKAMALFTVGPLLGPVIGPIIGGFVSENVGWRWTFRIILIFSGLIGVATVIFMRETNYTVLLQRKAQRARKETGNDKLVPKLTRNETPKQMLVRAIVRPLKLLIFSPIVLLVSLYTGILFGLIFLLFTTFPSVFQDVYGFSPGTAGLAYLGLGIGMILGLVLFSVLSDKMLKQKSGAARPEDRLILMKWLGPVTPLGLFIYGWTAKYAVHWIVPIIGTFVVGFGSLFVVIPGQIYLVDSFGAEAAASAMAANLLVRSPFGAFLDLTASPLYESLGLGWGNSVLGFICLLFTPVPWFFYTYGERMRTHFKVDL.

The disordered stretch occupies residues 1-65 (MATKDPAVTT…PDDPEHPLNW (65 aa)). N-linked (GlcNAc...) asparagine glycosylation is present at Asn64. The helical transmembrane segment at 72-92 (LHLVIVSLFTLAANLAATMFA) threads the bilayer. Residue Asn106 is glycosylated (N-linked (GlcNAc...) asparagine). The next 5 membrane-spanning stretches (helical) occupy residues 111-131 (AMTV…LAPL), 146-166 (FVYI…MFLV), 169-189 (IICG…VADL), 200-220 (ALFT…GGFV), and 228-248 (WTFR…VIFM). Asn252 carries N-linked (GlcNAc...) asparagine glycosylation. 6 consecutive transmembrane segments (helical) span residues 302-322 (PIVL…FLLF), 341-361 (GLAY…FSVL), 379-399 (LILM…YGWT), 406-426 (WIVP…VVIP), 429-449 (IYLV…ANLL), and 472-492 (GWGN…PWFF).

The protein belongs to the major facilitator superfamily.

It localises to the cell membrane. Functionally, efflux pump that might be required for efficient secretion of fusarisetin A or other secondary metabolies produced by the fusarisetin A gene cluster. The chain is MFS transporter fsa7 from Fusarium sp. (strain FN080326).